Consider the following 815-residue polypeptide: MSETLPRSDDLEATWNFIEPGINQILGNEKNQASTSKRVYKILSPTMYMEVYTAIYNYCVNKSRSSGHFSTDSRTGQSTILVGSEIYEKLKNYLKNYILNFKQSNSETFLQFYVKRWKRFTIGAIFLNHAFDYMNRYWVQKERSDGKRHIFDVNTLCLMTWKEVMFDPSKDVLINELLDQVTLGREGQIIQRSNISTAIKSLVALGIDPQDLKKLNLNVYIQVFEKPFLKKTQEYYTQYTNDYLEKHSVTEYIFEAHEIIKREEKAMTIYWDDHTKKPLSMALNKVLITDHIEKLENEFVVLLDARDIEKITSLYALIRRDFTLIPRMASVFENYVKKTGENEISSLLAMHKHNIMKNENANPKKLALMTAHSLSPKDYIKKLLEVHDIFSKIFNESFPDDIPLAKALDNACGAFININEFALPAGSPKSATSKTSEMLAKYSDILLKKATKPEVASDMSDEDIITIFKYLTDKDAFETHYRRLFAKRLIHGTSTSAEDEENIIQRLQAANSMEYTGKITKMFQDIRLSKILEDDFAVALKNEPDYSKAKYPDLQPFVLAENMWPFSYQEVEFKLPKELVPSHEKLKESYSQKHNGRILKWLWPLCRGELKADIGKPGRMPFNFTVTLFQMAILLLYNDADVLTLENIQEGTSLTIQHIAAAMVPFIKFKLIQQVPPGLDALVKPETQFKLSRPYKALKTNINFASGVKNDILQSLSGGGHDNHGNKLGNKRLTEDERIEKELNTERQIFLEACIVRIMKAKRNLPHTTLVNECIAQSHQRFNAKVSMVKRAIDSLIQKGYLQRGDDGESYAYLA.

Residues 9–280 (DDLEATWNFI…WDDHTKKPLS (272 aa)) form a required for interaction with SKP1/CBF3D and F-box protein region. A required for interaction with CDC34/UBC3 region spans residues 448-748 (KKATKPEVAS…IEKELNTERQ (301 aa)). One can recognise a Cullin neddylation domain in the interval 746-807 (ERQIFLEACI…QKGYLQRGDD (62 aa)). A Glycyl lysine isopeptide (Lys-Gly) (interchain with G-Cter in NEDD8) cross-link involves residue Lys760.

It belongs to the cullin family. In terms of assembly, component of multiple SCF (SKP1-CUL1-F-box) E3 ubiquitin-protein ligase complexes formed of CUL1, SKP1/HRT1, RBX1 and a variable F-box domain-containing protein as substrate-specific adapter. Component of the SCF(CDC4) complex containing CDC4. Component of the SCF(MET30) complex containing MET30. Component of the SCF(GRR1) complex containing GRR1. Component of the probable SCF(DIA2) complex containing DIA2. Component of the probable SCF(YDR131C) complex containing YDR131C. Component of the probable SCF(YDR306C) complex containing YDR306C. Component of the probable SCF(YLR224W) complex containing YLR224W. Component of the probable SCF(YJL149W) complex containing YJL149W. Component of the probable SCF(YNL311C) complex containing YNL311C. Component of the probable SCF(MDM30) complex containing MDM30. Component of the probable SCF(UFO1) complex containing UFO1. Component of the probable SCF(HRT3) complex containing HRT3. Component of the probable SCF(YBR280C) complex containing YBR280C. Component of the probable SCF(YBR352W) complex containing YBR352W. Interacts with DCN1, YBR280C, YLR224W and YLR352W. The unneddylated form interacts with LAG2/CAND1 and the interaction mediates the exchange of the F-box substrate-specific subunit. In terms of processing, neddylated; enhancing the ubiquitin-ligase activity.

Its subcellular location is the cytoplasm. The protein localises to the nucleus. Functionally, core component of multiple cullin-RING-based SCF (SKP1-CUL1-F-box) E3 ubiquitin-protein ligase complexes which mediate the ubiquitination and subsequent proteasomal degradation of target proteins. As a scaffold protein may contribute to catalysis through positioning of the substrate and the ubiquitin-conjugating enzyme. The SCF complex associates with CDC34 as the E2 ubiquitin-conjugating enzyme. The functional specificity of the SCF complex depends on the type of F-box protein. SCF(CDC4) controls the G1-to-S phase transition; it directs ubiquitination of the phosphorylated CDK inhibitor SIC1 and of CDC6. SCF(CDC4) directs ubiquitination of GCN4. SCF(GRR1) directs ubiquitination of phosphorylated CLN1, CLN2 and GIC2. SCF(MET30) directs ubiquitination of MET4. SCF(DIA2) is specifically involved in the pheromone induced degradation of phosphorylated TEC1. SCF(MDM30) seems to direct ubiquitination of FZ01. Involved in the regulation of methionine biosynthesis genes. The chain is Cell division control protein 53 (CDC53) from Saccharomyces cerevisiae (strain ATCC 204508 / S288c) (Baker's yeast).